A 217-amino-acid chain; its full sequence is Putative thymidylate synthase (217 aa).

C139 is an active-site residue.

This sequence belongs to the thymidylate synthase family. Archaeal-type ThyA subfamily. As to quaternary structure, monomer.

Its subcellular location is the cytoplasm. It participates in pyrimidine metabolism; dTTP biosynthesis. Its function is as follows. May catalyze the biosynthesis of dTMP using an unknown cosubstrate. The chain is Putative thymidylate synthase from Methanococcoides burtonii (strain DSM 6242 / NBRC 107633 / OCM 468 / ACE-M).